We begin with the raw amino-acid sequence, 217 residues long: Probable transaldolase (217 aa).

Lysine 85 functions as the Schiff-base intermediate with substrate in the catalytic mechanism.

Belongs to the transaldolase family. Type 3B subfamily.

The protein localises to the cytoplasm. It catalyses the reaction D-sedoheptulose 7-phosphate + D-glyceraldehyde 3-phosphate = D-erythrose 4-phosphate + beta-D-fructose 6-phosphate. The protein operates within carbohydrate degradation; pentose phosphate pathway; D-glyceraldehyde 3-phosphate and beta-D-fructose 6-phosphate from D-ribose 5-phosphate and D-xylulose 5-phosphate (non-oxidative stage): step 2/3. In terms of biological role, transaldolase is important for the balance of metabolites in the pentose-phosphate pathway. The polypeptide is Probable transaldolase (Lachnoclostridium phytofermentans (strain ATCC 700394 / DSM 18823 / ISDg) (Clostridium phytofermentans)).